We begin with the raw amino-acid sequence, 313 residues long: Synaptophysin (313 aa).

Over 1–25 (MLLLADMDVVNQLVAGGQFRVVKEP) the chain is Cytoplasmic. Positions 21–227 (VVKEPLGFVK…NLWFVFKETG (207 aa)) constitute an MARVEL domain. A helical transmembrane segment spans residues 26 to 49 (LGFVKVLQWVFAIFAFATCGSYSG). Topologically, residues 50–106 (ELQLSVDCANKTKSDLNIEVEFEYPFRLHEVYFEAPTCQGDPKKIFLVGNYSSSAEF) are vesicular. Residue Asn-59 is glycosylated (N-linked (GlcNAc...) asparagine). The residue at position 81 (Tyr-81) is a Phosphotyrosine. Asn-99 carries N-linked (GlcNAc...) asparagine glycosylation. The helical transmembrane segment at 107–130 (FVTVAVFAFLYSMGALATYIFLQN) threads the bilayer. Residues 131-137 (KYRENNK) lie on the Cytoplasmic side of the membrane. Residues 138–161 (GPMLDFLATAVFAFMWLVSSSAWA) traverse the membrane as a helical segment. Residues 162-199 (KGLSDVKMATDPENIIKGMHVCHQPGNTCKELRDPVTS) lie on the Vesicular side of the membrane. The chain crosses the membrane as a helical span at residues 200-223 (GLNTSVVFGFLNLVLWVGNLWFVF). Residues 224-313 (KETGWAAPFL…GAPTSFSNQM (90 aa)) are Cytoplasmic-facing. Residues 238-313 (GAPEKQPAPG…GAPTSFSNQM (76 aa)) form a disordered region. Positions 253-263 (AGYGQGPGGYG) are enriched in gly residues. The tract at residues 254–304 (GYGQGPGGYGPQDSYGPQGGYQPDYGQPASSGGGGYGPQGDYGQQGYGPQG) is repeats, Gly/Tyr-rich. Over residues 264–283 (PQDSYGPQGGYQPDYGQPAS) the composition is skewed to low complexity. Positions 284–302 (SGGGGYGPQGDYGQQGYGP) are enriched in gly residues.

Belongs to the synaptophysin/synaptobrevin family. In terms of assembly, homohexamer or homotetramer. Interacts with SRCIN1. Interacts with VAMP2; the interaction is inhibited by interaction of VAPM2 with SEPT8. Post-translationally, ubiquitinated; mediated by SIAH1 or SIAH2 and leading to its subsequent proteasomal degradation. Phosphorylated by SRC. In terms of tissue distribution, characteristic of a type of small (30-80 nm) neurosecretory vesicles, including presynaptic vesicles, but also vesicles of various neuroendocrine cells of both neuronal and epithelial phenotype.

Its subcellular location is the cytoplasmic vesicle. It is found in the secretory vesicle. The protein localises to the synaptic vesicle membrane. It localises to the synapse. The protein resides in the synaptosome. Possibly involved in structural functions as organizing other membrane components or in targeting the vesicles to the plasma membrane. Involved in the regulation of short-term and long-term synaptic plasticity. This is Synaptophysin (SYP) from Bos taurus (Bovine).